The following is a 263-amino-acid chain: Small ribosomal subunit protein uS2 (263 aa).

The residue at position 2 (Ser-2) is an N-acetylserine. Over residues 213 to 223 (NAAEEARAGAT) the composition is skewed to low complexity. Residues 213–245 (NAAEEARAGATEETEEVVAEAETEWNTETNVED) are disordered. A compositionally biased stretch (acidic residues) spans 224-245 (EETEEVVAEAETEWNTETNVED).

This sequence belongs to the universal ribosomal protein uS2 family. Component of the small ribosomal subunit. Mature ribosomes consist of a small (40S) and a large (60S) subunit. The 40S subunit contains about 33 different proteins and 1 molecule of RNA (18S). The 60S subunit contains about 49 different proteins and 3 molecules of RNA (25S, 5.8S and 5S). Interacts with RPS21.

Its subcellular location is the cytoplasm. In terms of biological role, required for the assembly and/or stability of the 40S ribosomal subunit. Required for the processing of the 20S rRNA-precursor to mature 18S rRNA in a late step of the maturation of 40S ribosomal subunits. This Clavispora lusitaniae (strain ATCC 42720) (Yeast) protein is Small ribosomal subunit protein uS2.